The chain runs to 247 residues: tRNA (guanine-N(1)-)-methyltransferase (247 aa).

S-adenosyl-L-methionine-binding positions include G112 and 131 to 136; that span reads LGDFVL.

It belongs to the RNA methyltransferase TrmD family. In terms of assembly, homodimer.

It is found in the cytoplasm. The catalysed reaction is guanosine(37) in tRNA + S-adenosyl-L-methionine = N(1)-methylguanosine(37) in tRNA + S-adenosyl-L-homocysteine + H(+). Its function is as follows. Specifically methylates guanosine-37 in various tRNAs. This chain is tRNA (guanine-N(1)-)-methyltransferase, found in Syntrophotalea carbinolica (strain DSM 2380 / NBRC 103641 / GraBd1) (Pelobacter carbinolicus).